The following is a 54-amino-acid chain: Protein YmjE (54 aa).

In Escherichia coli (strain K12), this protein is Protein YmjE.